Reading from the N-terminus, the 155-residue chain is Protein-export protein SecB (155 aa).

Belongs to the SecB family. Homotetramer, a dimer of dimers. One homotetramer interacts with 1 SecA dimer.

The protein localises to the cytoplasm. In terms of biological role, one of the proteins required for the normal export of preproteins out of the cell cytoplasm. It is a molecular chaperone that binds to a subset of precursor proteins, maintaining them in a translocation-competent state. It also specifically binds to its receptor SecA. This Cronobacter sakazakii (strain ATCC BAA-894) (Enterobacter sakazakii) protein is Protein-export protein SecB.